The sequence spans 306 residues: Glutaminase (306 aa).

Substrate-binding residues include Ser64, Asn115, Glu159, Asn166, Tyr190, Tyr242, and Val260.

It belongs to the glutaminase family. In terms of assembly, homotetramer.

It carries out the reaction L-glutamine + H2O = L-glutamate + NH4(+). The protein is Glutaminase of Vibrio vulnificus (strain YJ016).